The chain runs to 461 residues: Argininosuccinate lyase (461 aa).

It belongs to the lyase 1 family. Argininosuccinate lyase subfamily.

The protein resides in the cytoplasm. It catalyses the reaction 2-(N(omega)-L-arginino)succinate = fumarate + L-arginine. It participates in amino-acid biosynthesis; L-arginine biosynthesis; L-arginine from L-ornithine and carbamoyl phosphate: step 3/3. This is Argininosuccinate lyase from Chlorobium chlorochromatii (strain CaD3).